We begin with the raw amino-acid sequence, 120 residues long: Large ribosomal subunit protein bL19 (120 aa).

Belongs to the bacterial ribosomal protein bL19 family.

Its function is as follows. This protein is located at the 30S-50S ribosomal subunit interface and may play a role in the structure and function of the aminoacyl-tRNA binding site. The protein is Large ribosomal subunit protein bL19 of Synechococcus sp. (strain ATCC 27144 / PCC 6301 / SAUG 1402/1) (Anacystis nidulans).